The sequence spans 454 residues: MGLPTVPGLLLSLVLLALLMGIHPSGVTGLVPSLGDREKRDSLCPQGKYVHSKNNSICCTKCHKGTYLVSDCPSPGRDTVCRECEKGTFTASQNYLRQCLSCKTCRKEMSQVEISPCQADKDTVCGCKENQFQRYLSETHFQCVDCSPCFNGTVTIPCKETQNTVCNCHAGFFLRESECVPCSHCKKNEECMKLCLPPPLANVTNPQDSGTAVLLPLVILLGLCLLSFIFISLMCRYPRWRPEVYSIICRDPVPVKEEKAGKPLTPAPSPAFSPTSGFNPTLGFSTPGFSSPVSSTPISPIFGPSNWHFMPPVSEVVPTQGADPLLYESLCSVPAPTSVQKWEDSAHPQRPDNADLAILYAVVDGVPPARWKEFMRFMGLSEHEIERLEMQNGRCLREAQYSMLEAWRRRTPRHEDTLEVVGLVLSKMNLAGCLENILEALRNPAPSSTTRLPR.

An N-terminal signal peptide occupies residues 1-29 (MGLPTVPGLLLSLVLLALLMGIHPSGVTG). Over 30–212 (LVPSLGDREK…VTNPQDSGTA (183 aa)) the chain is Extracellular. 4 TNFR-Cys repeats span residues 43-82 (LCPQ…TVCR), 83-125 (ECEK…DTVC), 126-166 (GCKE…NTVC), and 167-196 (NCHA…KLCL). Cystine bridges form between Cys-44–Cys-58, Cys-59–Cys-72, Cys-62–Cys-81, Cys-84–Cys-99, Cys-102–Cys-117, Cys-105–Cys-125, Cys-127–Cys-143, Cys-146–Cys-158, Cys-149–Cys-166, Cys-168–Cys-179, Cys-182–Cys-195, and Cys-185–Cys-191. A glycan (N-linked (GlcNAc...) asparagine) is linked at Asn-54. N-linked (GlcNAc...) asparagine glycosylation occurs at Asn-151. Asn-202 carries an N-linked (GlcNAc...) asparagine glycan. Residues 213-235 (VLLPLVILLGLCLLSFIFISLMC) traverse the membrane as a helical segment. Residues 236-454 (RYPRWRPEVY…APSSTTRLPR (219 aa)) are Cytoplasmic-facing. The interval 339-349 (VQKWEDSAHPQ) is N-SMase activation domain (NSD). A Death domain is found at 356–441 (LAILYAVVDG…GCLENILEAL (86 aa)). A glycan ((Microbial infection) N-beta-linked (GlcNAc) arginine) is linked at Arg-376.

In terms of assembly, binding of TNF to the extracellular domain leads to homotrimerization. The aggregated death domains provide a novel molecular interface that interacts specifically with the death domain of TRADD. Various TRADD-interacting proteins such as TRAFS, RIPK1 and possibly FADD, are recruited to the complex by their association with TRADD. This complex activates at least two distinct signaling cascades, apoptosis and NF-kappa-B signaling. Interacts with BAG4, BABAM2, FEM1B, GRB2, SQSTM1 and TRPC4AP. Interacts with DAB2IP. Interacts directly with NOL3 (via CARD domain); inhibits TNF-signaling pathway. Interacts with SH3RF2, TRADD and RIPK1. SH3RF2 facilitates the recruitment of RIPK1 and TRADD to TNFRSF1A in a TNF-alpha-dependent process. Interacts with PGLYRP1; this interaction is important for cell death induction. Interacts (via death domain) with MADD (via death domain). Post-translationally, (Microbial infection) Glycosylated at Arg-376 by S.typhimurium protein Ssek3: arginine GlcNAcylation prevents homotypic/heterotypic death domain interactions.

Its subcellular location is the cell membrane. It localises to the golgi apparatus membrane. Receptor for TNFSF2/TNF-alpha and homotrimeric TNFSF1/lymphotoxin-alpha. The adapter molecule FADD recruits caspase-8 to the activated receptor. The resulting death-inducing signaling complex (DISC) performs caspase-8 proteolytic activation which initiates the subsequent cascade of caspases (aspartate-specific cysteine proteases) mediating apoptosis. This Mus musculus (Mouse) protein is Tumor necrosis factor receptor superfamily member 1A (Tnfrsf1a).